The following is a 554-amino-acid chain: Carboxypeptidase Y homolog A (554 aa).

The first 17 residues, methionine 1–serine 17, serve as a signal peptide directing secretion. Residues alanine 18–lysine 137 constitute a propeptide that is removed on maturation. Cystine bridges form between cysteine 191–cysteine 431, cysteine 325–cysteine 339, cysteine 349–cysteine 372, cysteine 356–cysteine 365, and cysteine 394–cysteine 401. Residue asparagine 222 is glycosylated (N-linked (GlcNAc...) asparagine). Serine 278 is an active-site residue. The active site involves aspartate 470. N-linked (GlcNAc...) asparagine glycosylation occurs at asparagine 518. Histidine 529 is a catalytic residue.

The protein belongs to the peptidase S10 family.

The protein resides in the vacuole. The enzyme catalyses Release of a C-terminal amino acid with broad specificity.. In terms of biological role, vacuolar carboxypeptidase involved in degradation of small peptides. Digests preferentially peptides containing an aliphatic or hydrophobic residue in P1' position, as well as methionine, leucine or phenylalanine in P1 position of ester substrate. The protein is Carboxypeptidase Y homolog A (cpyA) of Neurospora crassa (strain ATCC 24698 / 74-OR23-1A / CBS 708.71 / DSM 1257 / FGSC 987).